The following is a 335-amino-acid chain: Mycobacterial beta-ketoacyl-[acyl-carrier-protein] synthase III (335 aa).

Residues Cys122 and His258 contribute to the active site. The segment at 259-263 (QANSR) is ACP-binding. Residue Asn289 is part of the active site.

This sequence belongs to the thiolase-like superfamily. FabH family. As to quaternary structure, homodimer.

It localises to the cytoplasm. It carries out the reaction malonyl-[ACP] + dodecanoyl-CoA + H(+) = 3-oxotetradecanoyl-[ACP] + CO2 + CoA. Its pathway is lipid metabolism; fatty acid biosynthesis. It participates in lipid metabolism; mycolic acid biosynthesis. Catalyzes the condensation reaction of fatty acid synthesis by the addition to an acyl acceptor of two carbons from malonyl-ACP. Catalyzes the first condensation reaction which initiates fatty acid synthesis and may therefore play a role in governing the total rate of fatty acid production. Possesses both acetoacetyl-ACP synthase and acetyl transacylase activities. Its substrate specificity determines the biosynthesis of branched-chain and/or straight-chain of fatty acids. In Mycolicibacterium paratuberculosis (strain ATCC BAA-968 / K-10) (Mycobacterium paratuberculosis), this protein is Mycobacterial beta-ketoacyl-[acyl-carrier-protein] synthase III.